A 404-amino-acid polypeptide reads, in one-letter code: IDGNEAVAQVVYQINEVIAIYPITPSSPMAEWADAWASEGKPNIWGTVPTVVQMQSEGGVAGAVHGALQTGSLTTTFTASQGLLLMIPNMYKIAGELTPTVFHIAARSLAAQALSIFGDHSDVMATRGTGFAMLCAASVQEAHDFALISTRTTLESRIPFLHFFDGFRTSHEINKIELLTTENLQTFIPNELVIAHRSRAFTPDNSFTRGTGQNPDVYFQGEEGTVIYYIACQASLKSMDEFAQMTGRQYQLFEYHGDSTAERVIVLMGSGCETVHETVDYLNTLGEKVGVIKVRLYHPFDSQRFIAALPPTTRSIAVLDRTKEPGASGEPLYLDVVAALYEAGEQLPKVVGGRYGLSSKEFTPGMVKAVFDNLAATIPKNHFTIGINDDVSHTSLDYDPDFNI.

Belongs to the pyruvate:ferredoxin/flavodoxin oxidoreductase family.

The enzyme catalyses oxidized [flavodoxin] + pyruvate + CoA + 2 H(+) = reduced [flavodoxin] + acetyl-CoA + CO2. Oxidoreductase required for the transfer of electrons from pyruvate to flavodoxin, which reduces nitrogenase. This is Pyruvate-flavodoxin oxidoreductase (nifJ) from Nostoc sp. (strain ATCC 29151 / PCC 7119) (Anabaena sp.).